Reading from the N-terminus, the 571-residue chain is Coiled-coil domain-containing protein 22 homolog (571 aa).

Coiled coils occupy residues 406-434 (MMDLQTKSAMHARLQKELEKLNRTVSRTA) and 509-571 (CAEL…AHLR).

It belongs to the CCDC22 family.

This chain is Coiled-coil domain-containing protein 22 homolog, found in Culex quinquefasciatus (Southern house mosquito).